A 258-amino-acid polypeptide reads, in one-letter code: Pyridoxine 5'-phosphate synthase (258 aa).

Asparagine 6 contacts 3-amino-2-oxopropyl phosphate. Residue 8–9 (DH) participates in 1-deoxy-D-xylulose 5-phosphate binding. Residue arginine 17 participates in 3-amino-2-oxopropyl phosphate binding. Residue histidine 42 is the Proton acceptor of the active site. 1-deoxy-D-xylulose 5-phosphate contacts are provided by arginine 44 and histidine 49. The active-site Proton acceptor is the glutamate 69. 1-deoxy-D-xylulose 5-phosphate is bound at residue threonine 99. Histidine 213 acts as the Proton donor in catalysis. 3-amino-2-oxopropyl phosphate contacts are provided by residues glycine 214 and 235 to 236 (GQ).

The protein belongs to the PNP synthase family. Homooctamer; tetramer of dimers.

It is found in the cytoplasm. The enzyme catalyses 3-amino-2-oxopropyl phosphate + 1-deoxy-D-xylulose 5-phosphate = pyridoxine 5'-phosphate + phosphate + 2 H2O + H(+). It participates in cofactor biosynthesis; pyridoxine 5'-phosphate biosynthesis; pyridoxine 5'-phosphate from D-erythrose 4-phosphate: step 5/5. Catalyzes the complicated ring closure reaction between the two acyclic compounds 1-deoxy-D-xylulose-5-phosphate (DXP) and 3-amino-2-oxopropyl phosphate (1-amino-acetone-3-phosphate or AAP) to form pyridoxine 5'-phosphate (PNP) and inorganic phosphate. The protein is Pyridoxine 5'-phosphate synthase of Sulfurovum sp. (strain NBC37-1).